A 293-amino-acid polypeptide reads, in one-letter code: 4-hydroxy-tetrahydrodipicolinate synthase (293 aa).

Threonine 45 serves as a coordination point for pyruvate. The Proton donor/acceptor role is filled by tyrosine 133. Lysine 161 serves as the catalytic Schiff-base intermediate with substrate. Residue isoleucine 203 coordinates pyruvate.

Belongs to the DapA family. In terms of assembly, homotetramer; dimer of dimers.

The protein resides in the cytoplasm. The catalysed reaction is L-aspartate 4-semialdehyde + pyruvate = (2S,4S)-4-hydroxy-2,3,4,5-tetrahydrodipicolinate + H2O + H(+). It participates in amino-acid biosynthesis; L-lysine biosynthesis via DAP pathway; (S)-tetrahydrodipicolinate from L-aspartate: step 3/4. Catalyzes the condensation of (S)-aspartate-beta-semialdehyde [(S)-ASA] and pyruvate to 4-hydroxy-tetrahydrodipicolinate (HTPA). The sequence is that of 4-hydroxy-tetrahydrodipicolinate synthase from Syntrophotalea carbinolica (strain DSM 2380 / NBRC 103641 / GraBd1) (Pelobacter carbinolicus).